Here is a 77-residue protein sequence, read N- to C-terminus: uncharacterized protein (77 aa).

It is found in the plastid. Its subcellular location is the cyanelle. This is an uncharacterized protein from Cyanophora paradoxa.